We begin with the raw amino-acid sequence, 700 residues long: Constitutive coactivator of peroxisome proliferator-activated receptor gamma (700 aa).

This sequence belongs to the constitutive coactivator of PPAR-gamma family. Interacts with ESR1 and RXRA. Interacts with PPARG; in a ligand-independent manner.

It localises to the nucleus. Functionally, functions as a transactivator of PPARG and ESR1. Functions in adipogenesis through PPARG activation. This Bos taurus (Bovine) protein is Constitutive coactivator of peroxisome proliferator-activated receptor gamma (FAM120B).